We begin with the raw amino-acid sequence, 351 residues long: MSALARVLVVDDSPTMRGLISAVLKADPEVEVVGQAGNAMEARAAIKQLNPDVVTLDIEMPEMNGLEFLEKIMRLRPMPVIMVSSLTHRGADASLAALEIGAFDCVGKPAPGDARPFGDLADKVKAAARSQHAAYRATRPETAAAPQPVPMSEYRAGRKVVAIGSSTGGVEALIAVLQKFPANCPPTVITQHMPPTFTKSFAERLNRICAPVVEEATDGARLQTGKIYLAPGGERHLQIANRSAPCCRLLDRDPVNGHRPSVDVLFDSVAELAGRNAVGVILTGMGRDGAAGLLKMRHAGARTVGQNEKTCVVYGMPRVAYELGAVEQQLPLASIGEEILKLTTARKEGAD.

Residues 6–123 (RVLVVDDSPT…ARPFGDLADK (118 aa)) enclose the Response regulatory domain. The residue at position 57 (aspartate 57) is a 4-aspartylphosphate. In terms of domain architecture, CheB-type methylesterase spans 154–346 (YRAGRKVVAI…EEILKLTTAR (193 aa)). Residues serine 166, histidine 192, and aspartate 288 contribute to the active site.

Belongs to the CheB family. In terms of processing, phosphorylated by CheA. Phosphorylation of the N-terminal regulatory domain activates the methylesterase activity.

The protein resides in the cytoplasm. The catalysed reaction is [protein]-L-glutamate 5-O-methyl ester + H2O = L-glutamyl-[protein] + methanol + H(+). The enzyme catalyses L-glutaminyl-[protein] + H2O = L-glutamyl-[protein] + NH4(+). In terms of biological role, involved in chemotaxis. Part of a chemotaxis signal transduction system that modulates chemotaxis in response to various stimuli. Catalyzes the demethylation of specific methylglutamate residues introduced into the chemoreceptors (methyl-accepting chemotaxis proteins or MCP) by CheR. Also mediates the irreversible deamidation of specific glutamine residues to glutamic acid. The chain is Protein-glutamate methylesterase/protein-glutamine glutaminase from Agrobacterium fabrum (strain C58 / ATCC 33970) (Agrobacterium tumefaciens (strain C58)).